The sequence spans 742 residues: Kanadaptin (742 aa).

A compositionally biased stretch (polar residues) spans 1–16 (MADILSQSETLASQDL). The tract at residues 1-112 (MADILSQSET…PPWGGPATAP (112 aa)) is disordered. Residues 27–43 (VSPAARSKAPASSSSNP) show a composition bias toward low complexity. S28 carries the post-translational modification Phosphoserine. Residues 72–82 (GDFRSLQEEQS) show a composition bias toward basic and acidic residues. Position 90 is a phosphoserine (S90). The segment covering 96-106 (RAPPYQEPPWG) has biased composition (pro residues). Positions 135–195 (CLFGRLSGCD…HGTFLNKTRI (61 aa)) constitute an FHA domain. Residues 254 to 282 (LGEDSDEEEEMDTSERKINAGSQDDEMGC) form a disordered region. Acidic residues predominate over residues 256 to 265 (EDSDEEEEMD). S258 and S412 each carry phosphoserine. K441 participates in a covalent cross-link: Glycyl lysine isopeptide (Lys-Gly) (interchain with G-Cter in SUMO2). The stretch at 443 to 476 (ETFESLVAKLNDAERELSEISERLKASSQVLSES) forms a coiled coil. The residue at position 476 (S476) is a Phosphoserine. The segment at 565-742 (LKTGTVGKLP…RTHLNDKYGY (178 aa)) is disordered. A compositionally biased stretch (acidic residues) spans 591–606 (PEVEEEEEEEEEEEKE). Positions 607-619 (KEEHEKKKLEDGS) are enriched in basic and acidic residues. Phosphoserine occurs at positions 655 and 658. Residues 699–708 (PGPGKLPPTL) are compositionally biased toward low complexity. Residues 732–742 (GRTHLNDKYGY) show a composition bias toward basic and acidic residues.

As to expression, ubiquitously expressed.

Its subcellular location is the nucleus. It localises to the cytoplasm. This Homo sapiens (Human) protein is Kanadaptin (SLC4A1AP).